The primary structure comprises 134 residues: Large ribosomal subunit protein uL18 (134 aa).

This sequence belongs to the universal ribosomal protein uL18 family. As to quaternary structure, part of the 50S ribosomal subunit; part of the 5S rRNA/L5/L18/L25 subcomplex. Contacts the 5S and 23S rRNAs.

This is one of the proteins that bind and probably mediate the attachment of the 5S RNA into the large ribosomal subunit, where it forms part of the central protuberance. The protein is Large ribosomal subunit protein uL18 of Corynebacterium glutamicum (strain ATCC 13032 / DSM 20300 / JCM 1318 / BCRC 11384 / CCUG 27702 / LMG 3730 / NBRC 12168 / NCIMB 10025 / NRRL B-2784 / 534).